The following is a 333-amino-acid chain: Galactinol synthase 5 (333 aa).

Lys-103 is a catalytic residue. The Mn(2+) site is built by Asp-119, Asp-121, and His-257.

The protein belongs to the glycosyltransferase 8 family. Galactosyltransferase subfamily. It depends on a divalent metal cation as a cofactor.

The protein resides in the cytoplasm. The catalysed reaction is myo-inositol + UDP-alpha-D-galactose = alpha-D-galactosyl-(1-&gt;3)-1D-myo-inositol + UDP + H(+). Galactinol synthase involved in the biosynthesis of raffinose family oligosaccharides (RFOs) that function as osmoprotectants. May promote plant stress tolerance. The polypeptide is Galactinol synthase 5 (GOLS5) (Arabidopsis thaliana (Mouse-ear cress)).